A 481-amino-acid chain; its full sequence is Cobyric acid synthase (481 aa).

The 188-residue stretch at 249 to 436 (GLHIVCLRLS…LHGMFRDDAF (188 aa)) folds into the GATase cobBQ-type domain. The active-site Nucleophile is cysteine 331. Histidine 428 is an active-site residue.

This sequence belongs to the CobB/CobQ family. CobQ subfamily.

Its pathway is cofactor biosynthesis; adenosylcobalamin biosynthesis. Its function is as follows. Catalyzes amidations at positions B, D, E, and G on adenosylcobyrinic A,C-diamide. NH(2) groups are provided by glutamine, and one molecule of ATP is hydrogenolyzed for each amidation. The polypeptide is Cobyric acid synthase (Jannaschia sp. (strain CCS1)).